The primary structure comprises 67 residues: Large ribosomal subunit protein bL35 (67 aa).

It belongs to the bacterial ribosomal protein bL35 family.

The protein is Large ribosomal subunit protein bL35 of Methylorubrum extorquens (strain CM4 / NCIMB 13688) (Methylobacterium extorquens).